Reading from the N-terminus, the 88-residue chain is Gas vesicle protein A2 (88 aa).

Belongs to the gas vesicle GvpA family. The gas vesicle shell is 2 nm thick and consists of a single layer of this protein. It forms helical ribs nearly perpendicular to the long axis of the vesicle.

The protein resides in the gas vesicle shell. In terms of biological role, gas vesicles are hollow, gas filled proteinaceous nanostructures found in some microorganisms. During planktonic growth they allow positioning of the organism at a favorable depth for light or nutrient acquisition. GvpA forms the protein shell. Its function is as follows. It is not clear if the 2 type A proteins in this organism are functionally redundant. Functionally, when a minimal gvp locus (gvpA2-gvpR-gvpN-gvpF-gvpG-gvpL-gvpS-gvpK-gvpJ-gvpT-gvpU, called pNL29) is expressed in E.coli gas vesicles are made. The polypeptide is Gas vesicle protein A2 (Priestia megaterium (Bacillus megaterium)).